Consider the following 246-residue polypeptide: Eukaryotic translation initiation factor 6 (246 aa).

Residues serine 174 and serine 175 each carry the phosphoserine; by CK1 modification.

This sequence belongs to the eIF-6 family. In terms of assembly, monomer. Associates with the 60S ribosomal subunit. Phosphorylation at Ser-174 and Ser-175 promotes nuclear export.

It is found in the cytoplasm. Its subcellular location is the nucleus. The protein localises to the nucleolus. Functionally, binds to the 60S ribosomal subunit and prevents its association with the 40S ribosomal subunit to form the 80S initiation complex in the cytoplasm. Is also involved in ribosome biogenesis. Associates with pre-60S subunits in the nucleus and is involved in its nuclear export. The chain is Eukaryotic translation initiation factor 6 from Sordaria macrospora (strain ATCC MYA-333 / DSM 997 / K(L3346) / K-hell).